The chain runs to 249 residues: Homeobox protein TGIF2LX (249 aa).

Over residues 1–27 (MEAAADRPAETRSRVEKDSRRAKKDSP) the composition is skewed to basic and acidic residues. Disordered regions lie at residues 1–60 (MEAA…KKKR) and 121–215 (QRRG…EPVS). Positions 28-46 (AKTQSPAQDTSIMLRSNAD) are enriched in polar residues. A DNA-binding region (homeobox; TALE-type) is located at residues 55–118 (EHKKKRKGYL…INARRRILPD (64 aa)). Residues 159 to 172 (DNVQSLPLRSSPKG) show a composition bias toward polar residues. Positions 202–215 (VSNITSSSSPEPVS) are enriched in low complexity.

It belongs to the TALE/TGIF homeobox family.

Its subcellular location is the nucleus. Its function is as follows. May have a transcription role in testis. This Miopithecus talapoin (Angolan talapoin) protein is Homeobox protein TGIF2LX (TGIF2LX).